The following is a 447-amino-acid chain: Na(+)-translocating NADH-quinone reductase subunit A (447 aa).

Belongs to the NqrA family. As to quaternary structure, composed of six subunits; NqrA, NqrB, NqrC, NqrD, NqrE and NqrF.

The enzyme catalyses a ubiquinone + n Na(+)(in) + NADH + H(+) = a ubiquinol + n Na(+)(out) + NAD(+). In terms of biological role, NQR complex catalyzes the reduction of ubiquinone-1 to ubiquinol by two successive reactions, coupled with the transport of Na(+) ions from the cytoplasm to the periplasm. NqrA to NqrE are probably involved in the second step, the conversion of ubisemiquinone to ubiquinol. The sequence is that of Na(+)-translocating NADH-quinone reductase subunit A from Yersinia pestis.